The chain runs to 275 residues: COP9 signalosome complex subunit 7a (275 aa).

An N-acetylserine modification is found at serine 2. In terms of domain architecture, PCI spans 2–159 (SAEVKVTGQN…QRLEVDYSIG (158 aa)). The stretch at 185 to 233 (LSGIEEQVSRANQHKEQQLGLKQQIESEVANLKKTIKVTTAAAAAATSQ) forms a coiled coil. Positions 227 to 275 (AAAATSQDPEQHLTELREPAPGTNQRQPSKKASKGKGLRGSAKIWSKSN) are disordered. Residues 235–244 (PEQHLTELRE) are compositionally biased toward basic and acidic residues. Basic residues predominate over residues 254–263 (PSKKASKGKG).

Belongs to the CSN7/EIF3M family. CSN7 subfamily. Component of the CSN complex, composed of COPS1/GPS1, COPS2, COPS3, COPS4, COPS5, COPS6, COPS7 (COPS7A or COPS7B), COPS8 and COPS9. In the complex, it probably interacts directly with COPS1, COPS2, COPS4, COPS5, COPS6 and COPS8. Interacts with PMF1. Interacts with the translation initiation factor EIF3S6. Interacts with CK2 and PKD. Interacts directly with ID3. Phosphorylated by CK2 and PKD kinases.

It localises to the cytoplasm. The protein localises to the nucleus. In terms of biological role, component of the COP9 signalosome complex (CSN), a complex involved in various cellular and developmental processes. The CSN complex is an essential regulator of the ubiquitin (Ubl) conjugation pathway by mediating the deneddylation of the cullin subunits of SCF-type E3 ligase complexes, leading to decrease the Ubl ligase activity of SCF-type complexes such as SCF, CSA or DDB2. The complex is also involved in phosphorylation of p53/TP53, JUN, I-kappa-B-alpha/NFKBIA, ITPK1 and IRF8/ICSBP, possibly via its association with CK2 and PKD kinases. CSN-dependent phosphorylation of TP53 and JUN promotes and protects degradation by the Ubl system, respectively. The polypeptide is COP9 signalosome complex subunit 7a (COPS7A) (Pongo abelii (Sumatran orangutan)).